The sequence spans 372 residues: MDPLGAAKPQWPWRRCLAALLFQLLVAVCFFSYLRVSRDDATGSPRPGLMAVEPVTGAPSGSSRQDTTPTRPTLLILLWTWPFHIPVALSRCSEMVPGAADCHITADRKVYPQADAVIVHHWDIMYNPKSRLPPSPRPQGQRWIWFNLEPPPNCQHLEALDRYFNLTMSYRSDSDIFTPYGWLEPWSGQPAHPPLNLSAKTELVAWAVSNWKLDSARVRYYQSLQAHLKVDVYGRSHKPLPKGTMMETLSRYKFYLAFENSLHPDYITEKLWRNALEAWAVPVVLGPSRSNYERFLPPDAFIHVDDFQSPKDLARYLQELDKDHARYLSYFRWRETLRPRSFSWALDFCKACWKLQQESRYQTMRSIAAWFT.

Residues 1-15 (MDPLGAAKPQWPWRR) lie on the Cytoplasmic side of the membrane. The chain crosses the membrane as a helical; Signal-anchor for type II membrane protein span at residues 16-34 (CLAALLFQLLVAVCFFSYL). The Lumenal segment spans residues 35 to 372 (RVSRDDATGS…TMRSIAAWFT (338 aa)). A disordered region spans residues 40–69 (DATGSPRPGLMAVEPVTGAPSGSSRQDTTP). N-linked (GlcNAc...) asparagine glycans are attached at residues N165 and N196.

This sequence belongs to the glycosyltransferase 10 family. Glycosylated.

The protein localises to the golgi apparatus. It localises to the golgi stack membrane. It carries out the reaction a beta-D-galactosyl-(1-&gt;3)-N-acetyl-beta-D-glucosaminyl derivative + GDP-beta-L-fucose = a beta-D-galactosyl-(1-&gt;3)-[alpha-L-fucosyl-(1-&gt;4)]-N-acetyl-beta-D-glucosaminyl derivative + GDP + H(+). The catalysed reaction is an N-acetyl-alpha-neuraminyl-(2-&gt;3)-beta-D-galactosyl-(1-&gt;4)-N-acetyl-beta-D-glucosaminyl derivative + GDP-beta-L-fucose = an alpha-Neu5Ac-(2-&gt;3)-beta-D-Gal-(1-&gt;4)-[alpha-L-Fuc-(1-&gt;3)]-beta-D-GlcNAc derivative + GDP + H(+). The enzyme catalyses a beta-D-galactosyl-(1-&gt;4)-N-acetyl-beta-D-glucosaminyl derivative + GDP-beta-L-fucose = a beta-D-galactosyl-(1-&gt;4)-[alpha-L-fucosyl-(1-&gt;3)]-N-acetyl-beta-D-glucosaminyl derivative + GDP + H(+). It catalyses the reaction an alpha-Neu5Ac-(2-&gt;3)-beta-D-Gal-(1-&gt;4)-beta-D-GlcNAc-(1-&gt;3)-beta-D-Gal-(1-&gt;4)-[alpha-L-Fuc-(1-&gt;3)]-beta-D-GlcNAc derivative + GDP-beta-L-fucose = an alpha-Neu5Ac-(2-&gt;3)-beta-D-Gal-(1-&gt;4)-[alpha-L-Fuc-(1-&gt;3)]-beta-D-GlcNAc-(1-&gt;3)-beta-D-Gal-(1-&gt;4)-[alpha-L-Fuc-(1-&gt;3)]-beta-D-GlcNAc derivative + GDP + H(+). It carries out the reaction Lc4Cer + GDP-beta-L-fucose = a lactoside III(4)-a-Fuc-Lc4Cer + GDP + H(+). The catalysed reaction is a beta-D-Gal-(1-&gt;3)-beta-D-GlcNAc-(1-&gt;3)-beta-D-Gal-(1-&gt;4)-beta-D-Glc-(1&lt;-&gt;1')-Cer(d18:1(4E)) + GDP-beta-L-fucose = a III(4)-a-Fuc-Lc4Cer(d18:1(4E)) + GDP + H(+). The enzyme catalyses N-acetyl-alpha-neuraminosyl-(2-&gt;3)-beta-D-galactosyl-(1-&gt;3)-[N-acetyl-alpha-neuraminosyl-(2-&gt;6)]-N-acetyl-beta-D-glucosaminyl-(1-&gt;3)-beta-D-galactosyl-(1-&gt;4)-beta-D-glucosyl-(1&lt;-&gt;1')-N-acyl-sphing-4-enine + GDP-beta-L-fucose = N-acetyl-alpha-neuraminosyl-(2-&gt;3)-beta-D-galactosyl-(1-&gt;3)-alpha-L-fucosyl-(1-&gt;4)-[N-acetyl-alpha-neuraminosyl-(2-&gt;6)-N-acetyl-beta-D-glucosaminyl-(1-&gt;3)]-beta-D-galactosyl-(1-&gt;4)-beta-D-glucosyl-(1&lt;-&gt;1')-N-acyl-sphing-4-enine + GDP + H(+). It catalyses the reaction N-acetyl-alpha-neuraminosyl-(2-&gt;3)-beta-D-galactosyl-(1-&gt;3)-N-acetyl-beta-D-glucosaminyl-(1-&gt;3)-beta-D-galactosyl-(1-&gt;4)-beta-D-glucosyl-(1&lt;-&gt;1')-N-acyl-sphing-4-enine + GDP-beta-L-fucose = N-acetyl-alpha-neuraminosyl-(2-&gt;3)-beta-D-galactosyl-(1-&gt;3)-alpha-L-fucosyl-(1-&gt;4)-[N-acetyl-beta-D-glucosaminyl-(1-&gt;3)]-beta-D-galactosyl-(1-&gt;4)-beta-D-glucosyl-(1&lt;-&gt;1')-N-acyl-sphing-4-enine + GDP + H(+). It carries out the reaction beta-D-galactosyl-(1-&gt;3)-N-acetyl-D-glucosamine + GDP-beta-L-fucose = beta-D-galactosyl-(1-&gt;3)-[alpha-L-fucosyl-(1-&gt;4)]-N-acetyl-D-glucosamine + GDP + H(+). The catalysed reaction is alpha-L-Fuc-(1-&gt;2)-beta-D-Gal-(1-&gt;3)-D-GlcNAc + GDP-beta-L-fucose = alpha-L-Fuc-(1-&gt;2)-beta-D-Gal-(1-&gt;3)-[alpha-L-Fuc-(1-&gt;4)]-D-GlcNAc + GDP + H(+). The enzyme catalyses alpha-L-Fuc-(1-&gt;2)-beta-D-Gal-(1-&gt;4)-D-GlcNAc + GDP-beta-L-fucose = alpha-L-Fuc-(1-&gt;2)-beta-D-Gal-(1-&gt;4)-[alpha-L-Fuc-(1-&gt;3)]-D-GlcNAc + GDP + H(+). It catalyses the reaction beta-D-galactosyl-(1-&gt;4)-N-acetyl-D-glucosamine + GDP-beta-L-fucose = beta-D-galactosyl-(1-&gt;4)-[alpha-L-fucosyl-(1-&gt;3)]-N-acetyl-D-glucosamine + GDP + H(+). It carries out the reaction lactose + GDP-beta-L-fucose = beta-D-galactosyl-(1-&gt;4)-[alpha-L-fucosyl-(1-&gt;3)]-D-glucose + GDP + H(+). The catalysed reaction is an alpha-Neu5Ac-(2-&gt;3)-beta-D-Gal-(1-&gt;3)-D-GlcNAc derivative + GDP-beta-L-fucose = an alpha-Neu5Ac-(2-&gt;3)-beta-D-Gal-(1-&gt;3)-[alpha-L-Fuc-(1-&gt;4)]-beta-D-GlcNAc derivative + GDP + H(+). The protein operates within protein modification; protein glycosylation. Functionally, catalyzes the transfer of L-fucose, from a guanosine diphosphate-beta-L-fucose, to both the subterminal N-acetyl glucosamine (GlcNAc) of type 1 chain (beta-D-Gal-(1-&gt;3)-beta-D-GlcNAc) glycolipids and oligosaccharides via an alpha(1,4) linkage, and the subterminal glucose (Glc) or GlcNAc of type 2 chain (beta-D-Gal-(1-&gt;4)-beta-D-GlcNAc) oligosaccharides via an alpha(1,3) linkage, independently of the presence of terminal alpha-L-fucosyl-(1,2) moieties on the terminal galactose of these acceptors and participates in the blood groups Lewis determination and expression of Lewis a (Le(a)), lewis b (Le(b)), Lewis x/SSEA-1 (Le(x)) and lewis y (Le(y)) antigens. Also catalyzes the transfer of L-fucose to subterminal GlcNAc of sialyl- and disialyl-lactotetraosylceramide to produce sialyl Lewis a (sLe(a)) and disialyl Lewis a via an alpha(1,4) linkage and therefore may regulate cell surface sialyl Lewis a expression and consequently regulates adhesive properties to E-selectin, cell proliferation and migration. Catalyzes the transfer of an L-fucose to 3'-sialyl-N-acetyllactosamine by an alpha(1,3) linkage, which allows the formation of sialyl-Lewis x structure and therefore may regulate the sialyl-Lewis x surface antigen expression and consequently adhesive properties to E-selectin. Prefers type 1 chain over type 2 acceptors. Type 1 tetrasaccharide is a better acceptor than type 1 disaccharide suggesting that a beta anomeric configuration of GlcNAc in the substrate is preferred. Lewis-positive (Le(+)) individuals have an active enzyme while Lewis-negative (Le(-)) individuals have an inactive enzyme. This is 3-galactosyl-N-acetylglucosaminide 4-alpha-L-fucosyltransferase FUT3 from Pan troglodytes (Chimpanzee).